The chain runs to 59 residues: Large ribosomal subunit protein uL30 (59 aa).

This sequence belongs to the universal ribosomal protein uL30 family. In terms of assembly, part of the 50S ribosomal subunit.

This Enterococcus faecalis (strain ATCC 700802 / V583) protein is Large ribosomal subunit protein uL30.